Here is a 250-residue protein sequence, read N- to C-terminus: LexA repressor (250 aa).

The span at 1–21 shows a compositional bias: basic and acidic residues; it reads MTSQERGTRRGDTRGNVRDFP. The interval 1–33 is disordered; that stretch reads MTSQERGTRRGDTRGNVRDFPDSPADASGLTQR. Residues 54–74 constitute a DNA-binding region (H-T-H motif); sequence VREIGEAVGLTSTSSVAHQLK. Residues serine 174 and lysine 211 each act as for autocatalytic cleavage activity in the active site.

The protein belongs to the peptidase S24 family. As to quaternary structure, homodimer.

It carries out the reaction Hydrolysis of Ala-|-Gly bond in repressor LexA.. Represses a number of genes involved in the response to DNA damage (SOS response), including recA and lexA. In the presence of single-stranded DNA, RecA interacts with LexA causing an autocatalytic cleavage which disrupts the DNA-binding part of LexA, leading to derepression of the SOS regulon and eventually DNA repair. In Parafrankia sp. (strain EAN1pec), this protein is LexA repressor.